Reading from the N-terminus, the 336-residue chain is NmrA-like family domain-containing oxidoreductase malD (336 aa).

NADP(+) contacts are provided by residues 12–17, 40–44, 61–62, 82–84, K140, and 163–166; these read GGTGNQ, RDPTS, DG, TNS, and FMEA.

It belongs to the NmrA-type oxidoreductase family.

Its function is as follows. NmrA-like family domain-containing oxidoreductase; part of the gene cluster that mediates the biosynthesis of malbrancheamide, a dichlorinated fungal indole alkaloid that belongs to a family of natural products containing a characteristic bicyclo[2.2.2]diazaoctane core. The first step of malbrancheamide biosynthesis involves coupling of L-proline and L-tryptophan by malG, a bimodular NRPS, to produce L-Pro-L-Trp aldehyde through reductive offloading. This compound undergoes spontaneous cyclization and dehydration to give a dienamine which is reverse prenylated at C-2 by malE. The other prenyltransferase present in the cluster, malB, displays modest activity, suggesting that may be a redundant gene in the pathway. Subsequently, a [4+2] Diels-Alder cyclo-addition catalyzed by the bifunctional enzyme malC forms the characteristic bicyclo[2.2.2]diazaoctane ring of premalbrancheamid. Finally, the flavin-dependent halogenase malA catalyzes the iterative dichlorination of the indole ring of premalbrancheamide to yield C-9 monochlorinated malbrancheamide B, C-8 monochlorinated isomalbrancheamide B, and dichlorinated malbrancheamide. MalA is also able to brominate premalbrancheamide at C-9 to yield malbrancheamide C, and, to a lesser extend, at C-8 to yield isomalbrancheamide C. Finally, malA can brominate C-9 monochlorinated malbrancheamide B at C-8 to yield malbrancheamide D, or C-8 monochlorinated isomalbrancheamide B at C-9 to produce isomalbrancheamide D. The polypeptide is NmrA-like family domain-containing oxidoreductase malD (Malbranchea aurantiaca).